Consider the following 170-residue polypeptide: Endoribonuclease YbeY (170 aa).

Residues histidine 118, histidine 122, and histidine 128 each contribute to the Zn(2+) site.

Belongs to the endoribonuclease YbeY family. Requires Zn(2+) as cofactor.

The protein localises to the cytoplasm. Its function is as follows. Single strand-specific metallo-endoribonuclease involved in late-stage 70S ribosome quality control and in maturation of the 3' terminus of the 16S rRNA. This chain is Endoribonuclease YbeY, found in Mycobacteroides abscessus (strain ATCC 19977 / DSM 44196 / CCUG 20993 / CIP 104536 / JCM 13569 / NCTC 13031 / TMC 1543 / L948) (Mycobacterium abscessus).